The following is a 445-amino-acid chain: Fatty acid desaturase 3 (445 aa).

The tract at residues 1–21 (MGGVGEPGPREGPAQPGAPLP) is disordered. Residues 1–133 (MGGVGEPGPR…DMKLFDASPT (133 aa)) are Cytoplasmic-facing. Residues 20-97 (LPTFCWEQIR…LQPLLIGELA (78 aa)) enclose the Cytochrome b5 heme-binding domain. A helical membrane pass occupies residues 134-154 (FFAFLLGHILAMEVLAWLLIY). Residues 155-159 (LLGPG) lie on the Lumenal side of the membrane. A helical membrane pass occupies residues 160-180 (WVPSALAAFILAISQAQSWCL). Topologically, residues 181–263 (QHDLGHASIF…KRRYLPYNQQ (83 aa)) are cytoplasmic. The short motif at 182 to 186 (HDLGH) is the Histidine box-1 element. The Histidine box-2 signature appears at 219 to 223 (HFQHH). Residues 264-284 (HLYFFLIGPPLLTLVNFEVEN) traverse the membrane as a helical segment. At 285 to 306 (LAYMLVCMQWADLLWAASFYAR) the chain is on the lumenal side. Residues 307–327 (FFLSYLPFYGVPGVLLFFVAV) form a helical membrane-spanning segment. Over 328–445 (RVLESHWFVW…DIWLDAYLHQ (118 aa)) the chain is Cytoplasmic. Residues 383–387 (QIEHH) carry the Histidine box-3 motif.

It belongs to the fatty acid desaturase type 1 family. As to expression, highly expressed in various organs and tissues including liver, kidney, brain, lung, pancreas, testis, ovary and skeletal muscle (at protein level).

The protein resides in the endoplasmic reticulum membrane. It carries out the reaction an N-acylsphing-4-enine + 2 Fe(II)-[cytochrome b5] + O2 + 2 H(+) = an N-acyl-sphinga-4E,14Z-dienine + 2 Fe(III)-[cytochrome b5] + 2 H2O. It catalyses the reaction N-(hexanoyl)sphing-4-enine + 2 Fe(II)-[cytochrome b5] + O2 + 2 H(+) = N-hexanoyl-sphinga-4E,14Z-dienine + 2 Fe(III)-[cytochrome b5] + 2 H2O. The enzyme catalyses sphing-4-enine + 2 Fe(II)-[cytochrome b5] + O2 + 2 H(+) = sphinga-4E,14Z-dienine + 2 Fe(III)-[cytochrome b5] + 2 H2O. The catalysed reaction is (11E)-octadecenoyl-CoA + 2 Fe(II)-[cytochrome b5] + O2 + 2 H(+) = (11E,13Z)-octadecadienoyl-CoA + 2 Fe(III)-[cytochrome b5] + 2 H2O. It carries out the reaction N-acyl-1-deoxysphinganine + 2 Fe(II)-[cytochrome b5] + O2 + 2 H(+) = N-acyl-1-deoxysphing-14Z-enine + 2 Fe(III)-[cytochrome b5] + 2 H2O. It catalyses the reaction an N-acylsphinganine + 2 Fe(II)-[cytochrome b5] + O2 + 2 H(+) = an N-acylsphing-14Z-enine + 2 Fe(III)-[cytochrome b5] + 2 H2O. The protein operates within lipid metabolism; sphingolipid metabolism. Its pathway is lipid metabolism; polyunsaturated fatty acid biosynthesis. In terms of biological role, mammals have different sphingoid bases that differ in their length and/or pattern of desaturation and hydroxyl groups. The predominant sphingoid base that comprises mammalian ceramides is sphing-4-enine (sphingosine or SPH) which has a trans (E) desaturation at carbon 4. FADS3 is a desaturase that introduces a cis (Z) double bond between carbon 14 and carbon 15 of the sphingoid base (also known as long chain base, LCB), producing LCBs such as sphinga-4,14-dienine (SPD, d18:2(4E,14Z)) from SPH. Prefers SPH-containing ceramides (N-acylsphing-4-enines) as substrates. Capable of metabolizing also the SPH in its free form. SPD ceramides occur widely in mammalian tissues and cells. Due to their unusual structure containing a cis double bond, SPD ceramides may have an opposite, negative role in lipid microdomain formation relative to conventional ceramides. Could be involved in the detoxification of 1-deoxy sphingolipids, by desaturating the cytotoxic 1-deoxysphinganine (1-deoxySA, m18:0), produced under pathological conditions, to 1-deoxysphingenine (1-deoxysphingosine, 1-deoxySO, m18:1). Although prefers SPH-containing ceramides (N-acylsphing-4-enines) as substrates, it also exhibits activity toward dihydrosphingosine-containing CERs (N-acylsphinganines) and produces 14Z-SPH-containing sphingolipids,which can be found in patients with DEGS1 mutations. Its desaturase mechanism involves an electron transfer facilitated by cytochrome b5. FADS3 also acts as a methyl-end fatty acyl coenzyme A (CoA) desaturase that introduces a cis double bond between the preexisting double bond and the terminal methyl group of the fatty acyl chain. Desaturates (11E)-octadecenoate (trans-vaccenoate, the predominant trans fatty acid in human milk) at carbon 13 to generate (11E,13Z)-octadecadienoate (also known as conjugated linoleic acid 11E,13Z-CLA). This chain is Fatty acid desaturase 3, found in Homo sapiens (Human).